The sequence spans 92 residues: MSFLSNIFARRQQSSSVAKDRLQILLAHERGAGEAGESDLIRQLHKEIMEVIARHVAVDQDKVQIKVDRGSGCSMLEIDVEVPQELSGKRGS.

This sequence belongs to the MinE family.

Functionally, prevents the cell division inhibition by proteins MinC and MinD at internal division sites while permitting inhibition at polar sites. This ensures cell division at the proper site by restricting the formation of a division septum at the midpoint of the long axis of the cell. This is Cell division topological specificity factor from Gluconobacter oxydans (strain 621H) (Gluconobacter suboxydans).